Consider the following 284-residue polypeptide: Bifunctional protein FolD (284 aa).

Residues 164–166 and Ser-189 contribute to the NADP(+) site; that span reads GRS.

Belongs to the tetrahydrofolate dehydrogenase/cyclohydrolase family. As to quaternary structure, homodimer.

It catalyses the reaction (6R)-5,10-methylene-5,6,7,8-tetrahydrofolate + NADP(+) = (6R)-5,10-methenyltetrahydrofolate + NADPH. It carries out the reaction (6R)-5,10-methenyltetrahydrofolate + H2O = (6R)-10-formyltetrahydrofolate + H(+). The protein operates within one-carbon metabolism; tetrahydrofolate interconversion. In terms of biological role, catalyzes the oxidation of 5,10-methylenetetrahydrofolate to 5,10-methenyltetrahydrofolate and then the hydrolysis of 5,10-methenyltetrahydrofolate to 10-formyltetrahydrofolate. This Listeria welshimeri serovar 6b (strain ATCC 35897 / DSM 20650 / CCUG 15529 / CIP 8149 / NCTC 11857 / SLCC 5334 / V8) protein is Bifunctional protein FolD.